The chain runs to 302 residues: Pathogenicity locus probable regulatory protein HrpS (302 aa).

One can recognise a Sigma-54 factor interaction domain in the interval 9–237; the sequence is DDLDEERVPN…LKAAAKRHVL (229 aa). Residues 37–44 and 99–108 contribute to the ATP site; these read GETGTGKD and AQGGTLYLDE. Positions 279–298 form a DNA-binding region, H-T-H motif; the sequence is IDAASLELDMPRRTLYRRIK.

Member of the two-component regulatory system HrpR/HrpS that regulates the activation of the sigma factor hrpL which itself induces the expression of hprD as well as other hrp loci which are involved in plant pathogenicity, hrmA and avr genes. Probably interacts with sigma-54. This chain is Pathogenicity locus probable regulatory protein HrpS (hrpS), found in Pseudomonas savastanoi pv. phaseolicola (Pseudomonas syringae pv. phaseolicola).